Consider the following 277-residue polypeptide: Tetrahydroxynaphthalene reductase PfmaG (277 aa).

3 residues coordinate NADP(+): isoleucine 36, aspartate 82, and asparagine 109. Active-site proton donor residues include serine 158, serine 159, and tyrosine 173. Positions 173, 177, 206, and 208 each coordinate NADP(+). Lysine 177 acts as the Lowers pKa of active site Tyr in catalysis.

Belongs to the short-chain dehydrogenases/reductases (SDR) family.

The catalysed reaction is scytalone + NADP(+) = naphthalene-1,3,6,8-tetrol + NADPH + H(+). The protein operates within pigment biosynthesis; melanin biosynthesis. Tetrahydroxynaphthalene reductase; part of the gene cluster that mediates the biosynthesis of dihydroxynaphthalene (DHN)-melanin, a bluish-green pigment forming a dark layer in the conidial wall that protects the conidia from UV radiations. The first step of the pathway is the production of the pentaketide 1,3,6,8-tetrahydroxynaphthalene (1,3,6,8-THN or T4HN) by the polyketide synthase PfmaE though condensation of acetyl-CoA with malonyl-CoA. T4HN is not stable and easily oxidizes into the stable form flaviolin. T4HN is also substrate of the hydroxynaphthalene reductase PfmaG to yield scytalone. The scytalone dehydratase PfmaJ then reduces scytalone to 1,3,8-THN. 1,3,8-THN is then substrate of the hydroxynaphthalene reductase PfmaI to yield vermelone. Vermelone is further converted by the multicopper oxidase PfmaD to 1,8-DHN. Finally the laccase PFICI_06862 transforms 1,8-DHN to DHN-melanin. The roles of the 5-oxoprolinase PfmaA and the proline iminopeptidase PfmaB within the cluster have not been elucidated yet. This Pestalotiopsis fici (strain W106-1 / CGMCC3.15140) protein is Tetrahydroxynaphthalene reductase PfmaG.